We begin with the raw amino-acid sequence, 281 residues long: MITTQEISQIRQQVRAWHAKGETVAFVPTMGNLHLGHITLIKEAVKRADHVVASIFVNPMQFGQNEDLDAYPRTLAADQQALSDAGAELLFTPTPEIIYPKGMEQQSFVEVPNISEQLCGASRPGHFRGVATVVCKLFNIVQPDIALFGRKDFQQLLVIETMVADLSMPIEIIGVDTIREASGLAMSSRNGYLSQDQKDRAATLKRTMDTMSAAIQQGESIQDVIQAGHSQLSEAGFRPDYLEVRSTSDLSPASSEDSSLVILAAAYMGDTRLIDNLCFTR.

ATP is bound at residue 30–37 (MGNLHLGH). His37 functions as the Proton donor in the catalytic mechanism. Gln61 provides a ligand contact to (R)-pantoate. Gln61 provides a ligand contact to beta-alanine. An ATP-binding site is contributed by 149–152 (GRKD). Position 155 (Gln155) interacts with (R)-pantoate. ATP contacts are provided by residues Ile178 and 186–189 (MSSR).

It belongs to the pantothenate synthetase family. In terms of assembly, homodimer.

The protein resides in the cytoplasm. It catalyses the reaction (R)-pantoate + beta-alanine + ATP = (R)-pantothenate + AMP + diphosphate + H(+). The protein operates within cofactor biosynthesis; (R)-pantothenate biosynthesis; (R)-pantothenate from (R)-pantoate and beta-alanine: step 1/1. Its function is as follows. Catalyzes the condensation of pantoate with beta-alanine in an ATP-dependent reaction via a pantoyl-adenylate intermediate. In Shewanella sediminis (strain HAW-EB3), this protein is Pantothenate synthetase.